The primary structure comprises 229 residues: Leucyl/phenylalanyl-tRNA--protein transferase (229 aa).

Belongs to the L/F-transferase family.

The protein resides in the cytoplasm. It carries out the reaction N-terminal L-lysyl-[protein] + L-leucyl-tRNA(Leu) = N-terminal L-leucyl-L-lysyl-[protein] + tRNA(Leu) + H(+). It catalyses the reaction N-terminal L-arginyl-[protein] + L-leucyl-tRNA(Leu) = N-terminal L-leucyl-L-arginyl-[protein] + tRNA(Leu) + H(+). The catalysed reaction is L-phenylalanyl-tRNA(Phe) + an N-terminal L-alpha-aminoacyl-[protein] = an N-terminal L-phenylalanyl-L-alpha-aminoacyl-[protein] + tRNA(Phe). In terms of biological role, functions in the N-end rule pathway of protein degradation where it conjugates Leu, Phe and, less efficiently, Met from aminoacyl-tRNAs to the N-termini of proteins containing an N-terminal arginine or lysine. The chain is Leucyl/phenylalanyl-tRNA--protein transferase from Desulforapulum autotrophicum (strain ATCC 43914 / DSM 3382 / VKM B-1955 / HRM2) (Desulfobacterium autotrophicum).